The primary structure comprises 340 residues: Fructose-1,6-bisphosphatase class 1 (340 aa).

Mg(2+)-binding residues include Glu107, Asp126, Leu128, and Asp129. Asn215 contacts substrate. Glu287 contacts Mg(2+).

It belongs to the FBPase class 1 family. As to quaternary structure, homotetramer. Mg(2+) serves as cofactor.

It is found in the cytoplasm. The catalysed reaction is beta-D-fructose 1,6-bisphosphate + H2O = beta-D-fructose 6-phosphate + phosphate. The protein operates within carbohydrate biosynthesis; gluconeogenesis. This Brucella suis (strain ATCC 23445 / NCTC 10510) protein is Fructose-1,6-bisphosphatase class 1.